The primary structure comprises 408 residues: LL-diaminopimelate aminotransferase (408 aa).

Tyrosine 15 and glycine 42 together coordinate substrate. Pyridoxal 5'-phosphate is bound by residues tyrosine 72, 108–109, tyrosine 132, asparagine 187, tyrosine 218, and 246–248; these read SK and SFS. Residues lysine 109, tyrosine 132, and asparagine 187 each coordinate substrate. An N6-(pyridoxal phosphate)lysine modification is found at lysine 249. Pyridoxal 5'-phosphate is bound by residues arginine 257 and asparagine 292. Substrate contacts are provided by asparagine 292 and arginine 388.

It belongs to the class-I pyridoxal-phosphate-dependent aminotransferase family. LL-diaminopimelate aminotransferase subfamily. In terms of assembly, homodimer. It depends on pyridoxal 5'-phosphate as a cofactor.

It catalyses the reaction (2S,6S)-2,6-diaminopimelate + 2-oxoglutarate = (S)-2,3,4,5-tetrahydrodipicolinate + L-glutamate + H2O + H(+). It functions in the pathway amino-acid biosynthesis; L-lysine biosynthesis via DAP pathway; LL-2,6-diaminopimelate from (S)-tetrahydrodipicolinate (aminotransferase route): step 1/1. Functionally, involved in the synthesis of meso-diaminopimelate (m-DAP or DL-DAP), required for both lysine and peptidoglycan biosynthesis. Catalyzes the direct conversion of tetrahydrodipicolinate to LL-diaminopimelate. In Leptospira borgpetersenii serovar Hardjo-bovis (strain JB197), this protein is LL-diaminopimelate aminotransferase.